Consider the following 117-residue polypeptide: Appetite-regulating hormone (117 aa).

Residues 1–23 (MPSLGTMCSLLLFSVLWVDLAMA) form the signal peptide. The O-decanoyl serine; alternate moiety is linked to residue Ser-26. A lipid anchor (O-hexanoyl serine; alternate) is attached at Ser-26. Residue Ser-26 is the site of O-octanoyl serine; alternate attachment. The disordered stretch occupies residues 30-68 (PEHQKLQQRKESKKPPAKLQPRALEGSLGPEDTSQVEEA). The segment covering 31–43 (EHQKLQQRKESKK) has biased composition (basic and acidic residues). The propeptide at 52-75 (ALEGSLGPEDTSQVEEAEDELEIR) is removed in mature form. Position 98 is a leucine amide (Leu-98). Positions 99-117 (GKFLQEVLWEDTNEALADE) are cleaved as a propeptide — removed in mature form.

Belongs to the motilin family. In terms of processing, O-octanoylated by GOAT/MBOAT4. O-octanoylation is essential for ghrelin activity. Amidation of Leu-98 is essential for obestatin activity.

The protein localises to the secreted. Its function is as follows. Ghrelin is the ligand for growth hormone secretagogue receptor type 1 (GHSR). Induces the release of growth hormone from the pituitary. Has an appetite-stimulating effect, induces adiposity and stimulates gastric acid secretion. Involved in growth regulation. Obestatin may be the ligand for GPR39. May have an appetite-reducing effect resulting in decreased food intake. May reduce gastric emptying activity and jejunal motility. The sequence is that of Appetite-regulating hormone (GHRL) from Canis lupus familiaris (Dog).